The primary structure comprises 617 residues: Serine/threonine-protein kinase par-4 (617 aa).

Positions 1–11 (MDAPSTSSGAQ) are enriched in polar residues. The disordered stretch occupies residues 1–59 (MDAPSTSSGAQSKLLMPGDDEADEDHQNRGDPNLQQKQKIQLNVDPDYDDDEDDDCFID). Residues 46-57 (PDYDDDEDDDCF) are compositionally biased toward acidic residues. The region spanning 183-446 (YMWGGQIGTG…CLETMIHPWF (264 aa)) is the Protein kinase domain. ATP-binding positions include 189–197 (IGTGSYGKV) and Lys-212. Residue Asp-310 is the Proton acceptor of the active site. The segment at 523–617 (LEAKPGDGPD…CIFRSRTDSA (95 aa)) is disordered. Residues 587-597 (DPPPTAAPGAP) are compositionally biased toward pro residues.

Belongs to the protein kinase superfamily. CAMK Ser/Thr protein kinase family. LKB1 subfamily. As to quaternary structure, interacts with strd-1. Mg(2+) is required as a cofactor. Requires Mn(2+) as cofactor. In terms of tissue distribution, expressed in the gonads, oocytes and early embryos (at protein level).

It is found in the cytoplasm. Its subcellular location is the cell cortex. The catalysed reaction is L-seryl-[protein] + ATP = O-phospho-L-seryl-[protein] + ADP + H(+). It carries out the reaction L-threonyl-[protein] + ATP = O-phospho-L-threonyl-[protein] + ADP + H(+). In terms of biological role, required for cytoplasmic partitioning and asymmetric cell division in early embryogenesis. Controls the asymmetric cell division of the Q.p neuroblast lineage. Involved in mediating cell polarization via regulation of anillin family scaffold proteins. Phosphorylates and restricts the asymmetry effectors mex-5 and mex-6 to the anterior cytoplasm of the zygote and maintains these phosphorylations until fertilization. May phosphorylate par-1. Required for strd-1 localization to the cell cortex of early embryos and may be required for strd-1 protein stabilization. May regulate the integrity of the early embryonic cortex in a strd-1-dependent manner. Phosphorylates and regulates aak-2 in response to oxidative stress and during dauer development. May also play a role in motility, behavioral response, regulation of lifespan and dauer formation through this pathway. Required to establish germline stem cell (GSC) quiescence during dauer development. Acts downstream of unc-40 in dendrite outgrowth. May play a role in cell shedding during embryogenesis, probably by phosphorylating pig-1. The chain is Serine/threonine-protein kinase par-4 (par-4) from Caenorhabditis elegans.